The chain runs to 257 residues: NAD kinase (257 aa).

Asp-46 serves as the catalytic Proton acceptor. Residues 46-47 (DG), 116-117 (NE), Asp-146, Ala-154, and 157-162 (TAYNLS) each bind NAD(+).

Belongs to the NAD kinase family. The cofactor is a divalent metal cation.

It localises to the cytoplasm. It catalyses the reaction NAD(+) + ATP = ADP + NADP(+) + H(+). Functionally, involved in the regulation of the intracellular balance of NAD and NADP, and is a key enzyme in the biosynthesis of NADP. Catalyzes specifically the phosphorylation on 2'-hydroxyl of the adenosine moiety of NAD to yield NADP. The chain is NAD kinase from Mesorhizobium japonicum (strain LMG 29417 / CECT 9101 / MAFF 303099) (Mesorhizobium loti (strain MAFF 303099)).